A 270-amino-acid chain; its full sequence is 3-methyl-2-oxobutanoate hydroxymethyltransferase (270 aa).

Mg(2+) contacts are provided by aspartate 50 and aspartate 89. Residues aspartate 50–serine 51, aspartate 89, and lysine 118 each bind 3-methyl-2-oxobutanoate. Glutamate 120 is a Mg(2+) binding site. The active-site Proton acceptor is glutamate 187.

Belongs to the PanB family. Homodecamer; pentamer of dimers. Mg(2+) is required as a cofactor.

The protein resides in the cytoplasm. It catalyses the reaction 3-methyl-2-oxobutanoate + (6R)-5,10-methylene-5,6,7,8-tetrahydrofolate + H2O = 2-dehydropantoate + (6S)-5,6,7,8-tetrahydrofolate. Its pathway is cofactor biosynthesis; (R)-pantothenate biosynthesis; (R)-pantoate from 3-methyl-2-oxobutanoate: step 1/2. Functionally, catalyzes the reversible reaction in which hydroxymethyl group from 5,10-methylenetetrahydrofolate is transferred onto alpha-ketoisovalerate to form ketopantoate. The polypeptide is 3-methyl-2-oxobutanoate hydroxymethyltransferase (Helicobacter pylori (strain ATCC 700392 / 26695) (Campylobacter pylori)).